Consider the following 158-residue polypeptide: SsrA-binding protein (158 aa).

This sequence belongs to the SmpB family.

It localises to the cytoplasm. Functionally, required for rescue of stalled ribosomes mediated by trans-translation. Binds to transfer-messenger RNA (tmRNA), required for stable association of tmRNA with ribosomes. tmRNA and SmpB together mimic tRNA shape, replacing the anticodon stem-loop with SmpB. tmRNA is encoded by the ssrA gene; the 2 termini fold to resemble tRNA(Ala) and it encodes a 'tag peptide', a short internal open reading frame. During trans-translation Ala-aminoacylated tmRNA acts like a tRNA, entering the A-site of stalled ribosomes, displacing the stalled mRNA. The ribosome then switches to translate the ORF on the tmRNA; the nascent peptide is terminated with the 'tag peptide' encoded by the tmRNA and targeted for degradation. The ribosome is freed to recommence translation, which seems to be the essential function of trans-translation. This Bartonella henselae (strain ATCC 49882 / DSM 28221 / CCUG 30454 / Houston 1) (Rochalimaea henselae) protein is SsrA-binding protein.